The primary structure comprises 749 residues: Cytosolic phospholipase A2 (749 aa).

Residues M1–S178 are phospholipid binding. The residue at position 2 (S2) is a Phosphoserine. The region spanning P6 to F122 is the C2 domain. Ca(2+)-binding residues include D40, T41, D43, N65, D93, A94, and N95. The PLA2c domain maps to S140–N740. Catalysis depends on S228, which acts as the Nucleophile. A Phosphothreonine modification is found at T268. Residues K427–Y456 are disordered. Phosphoserine is present on residues S434, S435, and S437. S505 is subject to Phosphoserine; by MAPK. S515 carries the post-translational modification Phosphoserine. K541 participates in a covalent cross-link: Glycyl lysine isopeptide (Lys-Gly) (interchain with G-Cter in SUMO2). Residue D549 is the Proton acceptor of the active site. A Glycyl lysine isopeptide (Lys-Gly) (interchain with G-Cter in SUMO2) cross-link involves residue K606. S727 and S729 each carry phosphoserine.

As to quaternary structure, interacts with KAT5. Post-translationally, phosphorylated at both Ser-505 and Ser-727 in response to mitogenic stimuli.

The protein localises to the cytoplasm. It localises to the golgi apparatus membrane. It is found in the nucleus envelope. The catalysed reaction is a 1,2-diacyl-sn-glycero-3-phosphocholine + H2O = a 1-acyl-sn-glycero-3-phosphocholine + a fatty acid + H(+). It catalyses the reaction a 1-O-alkyl-2-acyl-sn-glycero-3-phosphocholine + H2O = a 1-O-alkyl-sn-glycero-3-phosphocholine + a fatty acid + H(+). It carries out the reaction a 1-acyl-sn-glycero-3-phosphocholine + H2O = sn-glycerol 3-phosphocholine + a fatty acid + H(+). The enzyme catalyses 1-hexadecanoyl-2-(5Z,8Z,11Z,14Z-eicosatetraenoyl)-sn-glycero-3-phosphocholine + H2O = 1-hexadecanoyl-sn-glycero-3-phosphocholine + (5Z,8Z,11Z,14Z)-eicosatetraenoate + H(+). The catalysed reaction is 1,2-di-(5Z,8Z,11Z,14Z-eicosatetraenoyl)-sn-glycero-3-phosphocholine + H2O = 1-(5Z,8Z,11Z,14Z-eicosatetraenoyl)-sn-glycero-3-phosphocholine + (5Z,8Z,11Z,14Z)-eicosatetraenoate + H(+). It catalyses the reaction 1-octadecanoyl-2-(5Z,8Z,11Z,14Z-eicosatetraenoyl)-sn-glycero-3-phosphocholine + H2O = 1-octadecanoyl-sn-glycero-3-phosphocholine + (5Z,8Z,11Z,14Z)-eicosatetraenoate + H(+). It carries out the reaction 1-hexadecanoyl-2-(9Z,12Z-octadecadienoyl)-sn-glycero-3-phosphocholine + H2O = (9Z,12Z)-octadecadienoate + 1-hexadecanoyl-sn-glycero-3-phosphocholine + H(+). The enzyme catalyses 1-octadecanoyl-2-(9Z,12Z,15Z-octadecatrienoyl)-sn-glycero-3-phosphocholine + H2O = (9Z,12Z,15Z)-octadecatrienoate + 1-octadecanoyl-sn-glycero-3-phosphocholine + H(+). The catalysed reaction is 1-(5Z,8Z,11Z,14Z-eicosatetraenoyl)-2-hexadecanoyl-sn-glycero-3-phosphocholine + H2O = 1-(5Z,8Z,11Z,14Z-eicosatetraenoyl)-sn-glycero-3-phosphocholine + hexadecanoate + H(+). It catalyses the reaction 1-O-hexadecyl-2-(5Z,8Z,11Z,14Z)-eicosatetraenoyl-sn-glycero-3-phosphocholine + H2O = 1-O-hexadecyl-sn-glycero-3-phosphocholine + (5Z,8Z,11Z,14Z)-eicosatetraenoate + H(+). It carries out the reaction 1,2-di-(9Z-octadecenoyl)-sn-glycero-3-phospho-(1'-sn-glycerol) + H2O = 1-(9Z-octadecenoyl)-sn-glycero-3-phospho-(1'-sn-glycerol) + (9Z)-octadecenoate + H(+). The enzyme catalyses 1-octadecanoyl-2-(5Z,8Z,11Z,14Z-eicosatetraenoyl)-sn-glycero-3-phosphate + H2O = 1-octadecanoyl-sn-glycero-3-phosphate + (5Z,8Z,11Z,14Z)-eicosatetraenoate + H(+). The catalysed reaction is 1-hexadecanoyl-sn-glycero-3-phosphocholine + H2O = sn-glycerol 3-phosphocholine + hexadecanoate + H(+). It catalyses the reaction 2-(prostaglandin E2)-sn-glycero-3-phosphoethanolamine + H2O = sn-glycero-3-phosphoethanolamine + prostaglandin E2 + H(+). It carries out the reaction 2-[(15S)-hydroxy-(5Z,8Z,11Z,13E)-eicosatetraenoyl]-sn-glycero-3-phosphocholine + H2O = (15S)-hydroxy-(5Z,8Z,11Z,13E)-eicosatetraenoate + sn-glycerol 3-phosphocholine + H(+). The enzyme catalyses 2-[(15R)-hydroxy-(5Z,8Z,11Z,13E)-eicosatetraenoyl]-sn-glycero-3-phosphocholine + H2O = (15R)-hydroxy-(5Z,8Z,11Z,13E)-eicosatetraenoate + sn-glycerol 3-phosphocholine + H(+). The catalysed reaction is 2-(prostaglandin E2)-sn-glycero-3-phosphocholine + H2O = prostaglandin E2 + sn-glycerol 3-phosphocholine + H(+). It catalyses the reaction 2-[(11R)-hydroxy-(5Z,8Z,12E,14Z)-eicosatetraenoyl]-sn-glycero-3-phosphocholine + H2O = (11R)-hydroxy-(5Z,8Z,12E,14Z)-eicosatetraenoate + sn-glycerol 3-phosphocholine + H(+). It carries out the reaction 1-(5Z,8Z,11Z,14Z-eicosatetraenoyl)-2-O-hexadecyl-sn-glycero-3-phosphocholine + H2O = 2-O-hexadecyl-sn-glycero-3-phosphocholine + (5Z,8Z,11Z,14Z)-eicosatetraenoate + H(+). The enzyme catalyses 1-octadecanoyl-2-(5Z,8Z,11Z,14Z-eicosatetraenoyl)-sn-glycero-3-phosphocholine + glycerol = 1-(5Z,8Z,11Z,14Z-eicosatetraenoyl)-glycerol + 1-octadecanoyl-sn-glycero-3-phosphocholine. The catalysed reaction is 1-octadecanoyl-2-(9Z,12Z,15Z-octadecatrienoyl)-sn-glycero-3-phosphocholine + glycerol = 1-(9Z,12Z,15Z-octadecatrienoyl)-glycerol + 1-octadecanoyl-sn-glycero-3-phosphocholine. It participates in membrane lipid metabolism; glycerophospholipid metabolism. Its pathway is lipid metabolism; arachidonate metabolism. It functions in the pathway lipid metabolism; prostaglandin biosynthesis. The protein operates within lipid metabolism; leukotriene B4 biosynthesis. Activated by cytosolic calcium, which is necessary for binding to membrane lipids. Activated by phosphorylation in response to mitogenic stimuli. In terms of biological role, has primarily calcium-dependent phospholipase and lysophospholipase activities, with a major role in membrane lipid remodeling and biosynthesis of lipid mediators of the inflammatory response. Plays an important role in embryo implantation and parturition through its ability to trigger prostanoid production. Preferentially hydrolyzes the ester bond of the fatty acyl group attached at sn-2 position of phospholipids (phospholipase A2 activity). Selectively hydrolyzes sn-2 arachidonoyl group from membrane phospholipids, providing the precursor for eicosanoid biosynthesis via the cyclooxygenase pathway. In an alternative pathway of eicosanoid biosynthesis, hydrolyzes sn-2 fatty acyl chain of eicosanoid lysophopholipids to release free bioactive eicosanoids. Hydrolyzes the ester bond of the fatty acyl group attached at sn-1 position of phospholipids (phospholipase A1 activity) only if an ether linkage rather than an ester linkage is present at the sn-2 position. This hydrolysis is not stereospecific. Has calcium-independent phospholipase A2 and lysophospholipase activities in the presence of phosphoinositides. Has O-acyltransferase activity. Catalyzes the transfer of fatty acyl chains from phospholipids to a primary hydroxyl group of glycerol (sn-1 or sn-3), potentially contributing to monoacylglycerol synthesis. This Equus caballus (Horse) protein is Cytosolic phospholipase A2 (PLA2G4A).